The following is a 114-amino-acid chain: WRMIWEHNTRNIIMLTQTVEKGKIKCDHYWPFDNEPIVSGDITIQMTSESMLPEWTIREFKITHGANTRRVRQFHYTVWPDHGVPETTETLVKFIRYVRRTIDGEAKHTGPTIV.

One can recognise a Tyrosine-protein phosphatase domain in the interval 1 to 114 (WRMIWEHNTR…EAKHTGPTIV (114 aa)). Asp-81 serves as a coordination point for substrate.

This sequence belongs to the protein-tyrosine phosphatase family.

It carries out the reaction O-phospho-L-tyrosyl-[protein] + H2O = L-tyrosyl-[protein] + phosphate. In Styela plicata (Wrinkled sea squirt), this protein is Tyrosine-protein phosphatase 11 (STY-11).